We begin with the raw amino-acid sequence, 218 residues long: Adenylate kinase (218 aa).

10 to 15 (GAGKGT) provides a ligand contact to ATP. The tract at residues 30–59 (STGDMLRAAVKAGTPLGVEAKKIMDAGALV) is NMP. Residues Thr31, Arg36, 57-59 (ALV), 85-88 (GFPR), and Gln92 each bind AMP. Positions 122–159 (GRRSHTASGRTYHVKYNPPKVEGKDDVTGEPLIQREDD) are LID. Residues Arg123 and 132–133 (TY) contribute to the ATP site. Positions 156 and 167 each coordinate AMP. Gly203 contributes to the ATP binding site.

The protein belongs to the adenylate kinase family. In terms of assembly, monomer.

It localises to the cytoplasm. It catalyses the reaction AMP + ATP = 2 ADP. It functions in the pathway purine metabolism; AMP biosynthesis via salvage pathway; AMP from ADP: step 1/1. Its function is as follows. Catalyzes the reversible transfer of the terminal phosphate group between ATP and AMP. Plays an important role in cellular energy homeostasis and in adenine nucleotide metabolism. The polypeptide is Adenylate kinase (Polaromonas sp. (strain JS666 / ATCC BAA-500)).